We begin with the raw amino-acid sequence, 295 residues long: Ribosomal protein L11 methyltransferase (295 aa).

Threonine 150, glycine 171, aspartate 193, and asparagine 232 together coordinate S-adenosyl-L-methionine.

The protein belongs to the methyltransferase superfamily. PrmA family.

The protein localises to the cytoplasm. The enzyme catalyses L-lysyl-[protein] + 3 S-adenosyl-L-methionine = N(6),N(6),N(6)-trimethyl-L-lysyl-[protein] + 3 S-adenosyl-L-homocysteine + 3 H(+). In terms of biological role, methylates ribosomal protein L11. The chain is Ribosomal protein L11 methyltransferase from Methylobacillus flagellatus (strain ATCC 51484 / DSM 6875 / VKM B-1610 / KT).